A 488-amino-acid chain; its full sequence is Probable (S)-N-methylcoclaurine 3'-hydroxylase isozyme 2 (488 aa).

The helical transmembrane segment at 2-21 (EVLSIAIVSFSFLLFLFFIL) threads the bilayer. Cysteine 427 lines the heme pocket.

Belongs to the cytochrome P450 family. Heme serves as cofactor. As to expression, expressed at low levels in roots.

It localises to the endoplasmic reticulum membrane. The protein resides in the microsome membrane. It catalyses the reaction (S)-N-methylcoclaurine + reduced [NADPH--hemoprotein reductase] + O2 = (S)-3'-hydroxy-N-methylcoclaurine + oxidized [NADPH--hemoprotein reductase] + H2O + H(+). It participates in alkaloid biosynthesis; (S)-reticuline biosynthesis; (S)-reticuline from (S)-norcoclaurine: step 3/4. In terms of biological role, 3'-hydroxylation of (S)-N-methylcoclaurine. This Coptis japonica (Japanese goldthread) protein is Probable (S)-N-methylcoclaurine 3'-hydroxylase isozyme 2 (CYP80B2).